The following is a 396-amino-acid chain: DNA excision repair protein ERCC-8 (396 aa).

WD repeat units follow at residues 33 to 73 (NKDR…LYDL), 88 to 129 (CSIG…VWDT), 133 to 173 (QTAD…LCDL), 177 to 216 (SCSH…LWDV), 235 to 274 (QAVE…LWNS), 281 to 321 (LVNY…VYTV), and 325 to 363 (EQIT…AWVP). The segment at 371 to 396 (DDDETTTKSQLNPAFEDAWSSSDEEG) is disordered. Phosphoserine occurs at positions 390, 391, and 392.

Part of the CSA complex (also named DCX(ERCC8) complex), a DCX E3 ubiquitin-protein ligase complex containing ERCC8, RBX1, DDB1 and CUL4A; the CSA complex interacts with RNA polymerase II; upon UV irradiation it interacts with the COP9 signalosome and preferentially with the hyperphosphorylated form of RNA polymerase II. Interacts with ERCC6/CSB (via CIM motif); promoting recruitment to lesion-stalled RNA polymerase II (Pol II). Interacts with KIAA1530/UVSSA. Interacts with a subunit of RNA polymerase II TFIIH.

The protein localises to the nucleus. It is found in the chromosome. The protein resides in the nucleus matrix. It functions in the pathway protein modification; protein ubiquitination. In terms of biological role, substrate-recognition component of the CSA complex, a DCX (DDB1-CUL4-X-box) E3 ubiquitin-protein ligase complex, involved in transcription-coupled nucleotide excision repair (TC-NER), a process during which RNA polymerase II-blocking lesions are rapidly removed from the transcribed strand of active genes. Following recruitment to lesion-stalled RNA polymerase II (Pol II), the CSA complex mediates ubiquitination of Pol II subunit POLR2A/RPB1 at 'Lys-1268', a critical TC-NER checkpoint, governing RNA Pol II stability and initiating DNA damage excision by TFIIH recruitment. The CSA complex also promotes the ubiquitination and subsequent proteasomal degradation of ERCC6/CSB in a UV-dependent manner; ERCC6 degradation is essential for the recovery of RNA synthesis after transcription-coupled repair. Also plays a role in DNA double-strand breaks (DSSBs) repair by non-homologous end joining (NHEJ). This Homo sapiens (Human) protein is DNA excision repair protein ERCC-8.